The primary structure comprises 248 residues: tRNA (guanine-N(1)-)-methyltransferase (248 aa).

Residues Gly113 and 133–138 (IGDYVL) contribute to the S-adenosyl-L-methionine site.

It belongs to the RNA methyltransferase TrmD family. As to quaternary structure, homodimer.

It is found in the cytoplasm. The enzyme catalyses guanosine(37) in tRNA + S-adenosyl-L-methionine = N(1)-methylguanosine(37) in tRNA + S-adenosyl-L-homocysteine + H(+). Its function is as follows. Specifically methylates guanosine-37 in various tRNAs. In Shewanella piezotolerans (strain WP3 / JCM 13877), this protein is tRNA (guanine-N(1)-)-methyltransferase.